The sequence spans 333 residues: Anthranilate phosphoribosyltransferase (333 aa).

5-phospho-alpha-D-ribose 1-diphosphate-binding positions include glycine 81, 84-85 (GD), threonine 89, 91-94 (NIST), 109-117 (KHGNRSVSS), and alanine 121. An anthranilate-binding site is contributed by glycine 81. Residue serine 93 participates in Mg(2+) binding. Asparagine 112 is a binding site for anthranilate. Residue arginine 167 coordinates anthranilate. Residues aspartate 225 and glutamate 226 each contribute to the Mg(2+) site.

This sequence belongs to the anthranilate phosphoribosyltransferase family. As to quaternary structure, homodimer. Requires Mg(2+) as cofactor.

It catalyses the reaction N-(5-phospho-beta-D-ribosyl)anthranilate + diphosphate = 5-phospho-alpha-D-ribose 1-diphosphate + anthranilate. It functions in the pathway amino-acid biosynthesis; L-tryptophan biosynthesis; L-tryptophan from chorismate: step 2/5. Its function is as follows. Catalyzes the transfer of the phosphoribosyl group of 5-phosphorylribose-1-pyrophosphate (PRPP) to anthranilate to yield N-(5'-phosphoribosyl)-anthranilate (PRA). In Pasteurella multocida (strain Pm70), this protein is Anthranilate phosphoribosyltransferase.